Reading from the N-terminus, the 200-residue chain is Kunitz type trypsin inhibitor 111 (200 aa).

Positions 1–24 (MSTISFTIFILANVWLLVVTTSIA) are cleaved as a signal peptide. Intrachain disulfides connect Cys-62–Cys-108, Cys-160–Cys-172, and Cys-165–Cys-168.

The protein belongs to the protease inhibitor I3 (leguminous Kunitz-type inhibitor) family. As to quaternary structure, interacts with SCP1.

Its subcellular location is the secreted. It localises to the extracellular space. It is found in the apoplast. The sequence is that of Kunitz type trypsin inhibitor 111 (KPI111) from Medicago truncatula (Barrel medic).